The following is a 363-amino-acid chain: Peptide chain release factor 1 (363 aa).

At glutamine 237 the chain carries N5-methylglutamine. Residues 284-296 show a composition bias toward basic and acidic residues; that stretch reads EDEKRRSAEESTR. Positions 284–306 are disordered; sequence EDEKRRSAEESTRRSLVASGDRS.

This sequence belongs to the prokaryotic/mitochondrial release factor family. Methylated by PrmC. Methylation increases the termination efficiency of RF1.

It is found in the cytoplasm. Functionally, peptide chain release factor 1 directs the termination of translation in response to the peptide chain termination codons UAG and UAA. The polypeptide is Peptide chain release factor 1 (Shewanella oneidensis (strain ATCC 700550 / JCM 31522 / CIP 106686 / LMG 19005 / NCIMB 14063 / MR-1)).